The sequence spans 682 residues: Heat shock 70 kDa protein 10, mitochondrial (682 aa).

A mitochondrion-targeting transit peptide spans 1–50; the sequence is MATAALLRSIRRREVVSSPFSAYRCLSSSGKASLNSSYLGQNFRSFSRAF. The tract at residues 646 to 682 is disordered; the sequence is KIGEHMSGGSGGGSAPGGGSEGGSDQAPEAEYEEVKK. Gly residues predominate over residues 651 to 667; sequence MSGGSGGGSAPGGGSEG. A compositionally biased stretch (acidic residues) spans 673-682; that stretch reads PEAEYEEVKK.

The protein belongs to the heat shock protein 70 (TC 1.A.33) family. DnaK subfamily.

The protein resides in the mitochondrion. Its function is as follows. Chaperone involved in the maturation of iron-sulfur [Fe-S] cluster-containing proteins. Has a low intrinsic ATPase activity which is markedly stimulated by HSCB and ISU1. In cooperation with other chaperones, Hsp70s are key components that facilitate folding of de novo synthesized proteins, assist translocation of precursor proteins into organelles, and are responsible for degradation of damaged protein under stress conditions. This Arabidopsis thaliana (Mouse-ear cress) protein is Heat shock 70 kDa protein 10, mitochondrial.